The chain runs to 321 residues: Lipoyl synthase (321 aa).

[4Fe-4S] cluster is bound by residues cysteine 68, cysteine 73, cysteine 79, cysteine 94, cysteine 98, cysteine 101, and serine 308. The 218-residue stretch at 80–297 (FNHGTATFMI…KAEALAMGFT (218 aa)) folds into the Radical SAM core domain.

This sequence belongs to the radical SAM superfamily. Lipoyl synthase family. Requires [4Fe-4S] cluster as cofactor.

It is found in the cytoplasm. It catalyses the reaction [[Fe-S] cluster scaffold protein carrying a second [4Fe-4S](2+) cluster] + N(6)-octanoyl-L-lysyl-[protein] + 2 oxidized [2Fe-2S]-[ferredoxin] + 2 S-adenosyl-L-methionine + 4 H(+) = [[Fe-S] cluster scaffold protein] + N(6)-[(R)-dihydrolipoyl]-L-lysyl-[protein] + 4 Fe(3+) + 2 hydrogen sulfide + 2 5'-deoxyadenosine + 2 L-methionine + 2 reduced [2Fe-2S]-[ferredoxin]. The protein operates within protein modification; protein lipoylation via endogenous pathway; protein N(6)-(lipoyl)lysine from octanoyl-[acyl-carrier-protein]: step 2/2. In terms of biological role, catalyzes the radical-mediated insertion of two sulfur atoms into the C-6 and C-8 positions of the octanoyl moiety bound to the lipoyl domains of lipoate-dependent enzymes, thereby converting the octanoylated domains into lipoylated derivatives. The chain is Lipoyl synthase from Salmonella typhi.